The primary structure comprises 264 residues: MERAIGVIDSGVGGLTVAKEIMRQLPKERIVYLGDTARCPYGPRPKEEIRQFTWEMTNYLLRYNIKMLVIACNTATAVVLDEIREQLDIPVLGVVHPGARAALKATKNGHIGVIGTIGTVKSGAYEKALKSINHRVRVESLACPKFVPLVESGNFEGEEARKIVAESLEPFKSSNMDVLILGCTHYPLLSPLIKEYMGKRVKLICSGDETAREVSAILHHSHLLYTGQREAEHLFFTTGSKELFQKIASKWFGKPIENVQTIEL.

Substrate contacts are provided by residues 9–10 and 41–42; these read DS and YG. The Proton donor/acceptor role is filled by Cys72. Residue 73-74 coordinates substrate; it reads NT. Cys183 (proton donor/acceptor) is an active-site residue. 184–185 is a substrate binding site; that stretch reads TH.

Belongs to the aspartate/glutamate racemases family.

The enzyme catalyses L-glutamate = D-glutamate. Its pathway is cell wall biogenesis; peptidoglycan biosynthesis. In terms of biological role, provides the (R)-glutamate required for cell wall biosynthesis. The protein is Glutamate racemase of Geobacillus sp. (strain WCH70).